Consider the following 358-residue polypeptide: Fructose-bisphosphate aldolase 1, cytoplasmic (358 aa).

Arg-39 contacts substrate. Glu-183 functions as the Proton acceptor in the catalytic mechanism. The Schiff-base intermediate with dihydroxyacetone-P role is filled by Lys-225. Substrate-binding positions include 266 to 268 (SGG) and Arg-298.

Belongs to the class I fructose-bisphosphate aldolase family. As to quaternary structure, homotetramer. Expressed in callus.

It localises to the cytoplasm. Its subcellular location is the cytosol. The enzyme catalyses beta-D-fructose 1,6-bisphosphate = D-glyceraldehyde 3-phosphate + dihydroxyacetone phosphate. It participates in carbohydrate degradation; glycolysis; D-glyceraldehyde 3-phosphate and glycerone phosphate from D-glucose: step 4/4. Functionally, fructose-bisphosphate aldolase that plays a key role in glycolysis and gluconeogenesis. Involved in gibberellin-mediated root growth. May be regulated by CDPK13. Associates with vacuolar proton ATPase (V-ATPase) and may regulate the V-ATPase-mediated control of root cell elongation. The sequence is that of Fructose-bisphosphate aldolase 1, cytoplasmic from Oryza sativa subsp. japonica (Rice).